We begin with the raw amino-acid sequence, 261 residues long: MPSMTSKVFAITGGASGIGAATCRLLAERGAAVICLADVSSTNFTSLQESIAKSNPSTLVHCTELDVRSADKVDQWLQSIVSTHGDLHGAANVAGIAQGAGLRATPTILEENDAEWSRILDVNLNGVFYSTRAQVRVMKDLPPGHRSIVNVASIAAFSHVPDVYAYGTSKSACAYLTTCIAADVFWSGIRVNCVSPGITNTPMLPQFEPKAKSLDEIKDMYRDQGYPTGEADGVARTIVWLLSEDSIPVYGANINVGACPP.

An N-terminal signal peptide occupies residues 1 to 20 (MPSMTSKVFAITGGASGIGA). NADP(+) is bound at residue Ile-18. Asn-43 carries an N-linked (GlcNAc...) asparagine glycan. NADP(+) contacts are provided by Asp-66, Arg-132, Tyr-166, Lys-170, and Thr-201. The active-site Proton donor is the Tyr-166. Lys-170 serves as the catalytic Lowers pKa of active site Tyr.

This sequence belongs to the short-chain dehydrogenases/reductases (SDR) family. As to quaternary structure, homotetramer.

The enzyme catalyses chanoclavine-I + NAD(+) = chanoclavine-I aldehyde + NADH + H(+). It participates in alkaloid biosynthesis; ergot alkaloid biosynthesis. In terms of biological role, chanoclavine-I dehydrogenase; part of the gene cluster that mediates the biosynthesis of fungal ergot alkaloid. DmaW catalyzes the first step of ergot alkaloid biosynthesis by condensing dimethylallyl diphosphate (DMAP) and tryptophan to form 4-dimethylallyl-L-tryptophan. The second step is catalyzed by the methyltransferase easF that methylates 4-dimethylallyl-L-tryptophan in the presence of S-adenosyl-L-methionine, resulting in the formation of 4-dimethylallyl-L-abrine. The catalase easC and the FAD-dependent oxidoreductase easE then transform 4-dimethylallyl-L-abrine to chanoclavine-I which is further oxidized by easD in the presence of NAD(+), resulting in the formation of chanoclavine-I aldehyde. Agroclavine dehydrogenase easG then mediates the conversion of chanoclavine-I aldehyde to agroclavine via a non-enzymatic adduct reaction: the substrate is an iminium intermediate that is formed spontaneously from chanoclavine-I aldehyde in the presence of glutathione. The presence of easA is not required to complete this reaction. Further conversion of agroclavine to paspalic acid is a two-step process involving oxidation of agroclavine to elymoclavine and of elymoclavine to paspalic acid, the second step being performed by the elymoclavine oxidase cloA. Paspalic acid is then further converted to D-lysergic acid. Ergopeptines are assembled from D-lysergic acid and three different amino acids by the D-lysergyl-peptide-synthetases composed each of a monomudular and a trimodular nonribosomal peptide synthetase subunit. LpsB and lpsC encode the monomodular subunits responsible for D-lysergic acid activation and incorporation into the ergopeptine backbone. LpsA1 and A2 subunits encode the trimodular nonribosomal peptide synthetase assembling the tripeptide portion of ergopeptines. LpsA1 is responsible for formation of the major ergopeptine, ergotamine, and lpsA2 for alpha-ergocryptine, the minor ergopeptine of the total alkaloid mixture elaborated by C.purpurea. D-lysergyl-tripeptides are assembled by the nonribosomal peptide synthetases and released as N-(D-lysergyl-aminoacyl)-lactams. Cyclolization of the D-lysergyl-tripeptides is performed by the Fe(2+)/2-ketoglutarate-dependent dioxygenase easH which introduces a hydroxyl group into N-(D-lysergyl-aminoacyl)-lactam at alpha-C of the aminoacyl residue followed by spontaneous condensation with the terminal lactam carbonyl group. The chain is Chanoclavine-I dehydrogenase easD from Claviceps purpurea (strain 20.1) (Ergot fungus).